The primary structure comprises 89 residues: Small ribosomal subunit protein uS17 (89 aa).

The protein belongs to the universal ribosomal protein uS17 family. In terms of assembly, part of the 30S ribosomal subunit.

Functionally, one of the primary rRNA binding proteins, it binds specifically to the 5'-end of 16S ribosomal RNA. This Stenotrophomonas maltophilia (strain K279a) protein is Small ribosomal subunit protein uS17.